The sequence spans 66 residues: Large ribosomal subunit protein bL35 (66 aa).

The segment covering 1-16 (MPKQKTHRASAKRFKR) has biased composition (basic residues). The disordered stretch occupies residues 1-20 (MPKQKTHRASAKRFKRTGSG).

This sequence belongs to the bacterial ribosomal protein bL35 family.

In Streptococcus thermophilus (strain CNRZ 1066), this protein is Large ribosomal subunit protein bL35.